A 532-amino-acid chain; its full sequence is Invertase 1 (532 aa).

An N-terminal signal peptide occupies residues 1–19 (MLLQAFLFLLAGFAAKISA). N-linked (GlcNAc...) asparagine glycosylation occurs at asparagine 23. Substrate-binding positions include 39 to 42 (WMND) and glutamine 60. The active site involves aspartate 42. The N-linked (GlcNAc...) asparagine glycan is linked to asparagine 64. 102–103 (YS) serves as a coordination point for substrate. Residues asparagine 111, asparagine 112, asparagine 118, and asparagine 165 are each glycosylated (N-linked (GlcNAc...) asparagine). Residues 170–171 (RD) and glutamate 223 each bind substrate. Asparagine 275 carries N-linked (GlcNAc...) asparagine glycosylation. Residue tryptophan 311 coordinates substrate. N-linked (GlcNAc...) asparagine glycans are attached at residues asparagine 356, asparagine 369, asparagine 384, asparagine 398, and asparagine 512.

The protein belongs to the glycosyl hydrolase 32 family. Post-translationally, isoform Secreted is glycosylated. Isoform Intracellular is not glycosylated.

It localises to the cytoplasm. The protein localises to the secreted. It catalyses the reaction Hydrolysis of terminal non-reducing beta-D-fructofuranoside residues in beta-D-fructofuranosides.. This Saccharomyces cerevisiae (Baker's yeast) protein is Invertase 1 (SUC1).